We begin with the raw amino-acid sequence, 435 residues long: Eukaryotic peptide chain release factor subunit 1-3 (435 aa).

Ala2 bears the N-acetylalanine mark.

It belongs to the eukaryotic release factor 1 family. As to quaternary structure, heterodimer of two subunits, one of which binds GTP.

It is found in the cytoplasm. Directs the termination of nascent peptide synthesis (translation) in response to the termination codons UAA, UAG and UGA. Modulates plant growth and development. In Arabidopsis thaliana (Mouse-ear cress), this protein is Eukaryotic peptide chain release factor subunit 1-3 (ERF1-3).